The following is a 235-amino-acid chain: MGQKVHPNGMRLGIIKHWNSVWFSNSKDFAKILDSDYQVRLFLRKELFKASVSRIVIERPSKSIRVTIYSARPGIVIGKKGEDVEKLRLSITNITGVPTQINIAEIRKPELDAKLVADNIVSQLERRIMFRRAMKRAVQNAMRQGAKGIKVEISGRLGGTEIARREWYREGRVPLHTLRADIEYNVSEAHTTYGVIGVKVWIFKGEILGGIGSIPKIEKQKPMSQLKKHQRRYRK.

The region spanning 39–107 is the KH type-2 domain; the sequence is VRLFLRKELF…PTQINIAEIR (69 aa).

Belongs to the universal ribosomal protein uS3 family. As to quaternary structure, part of the 30S ribosomal subunit. Forms a tight complex with proteins S10 and S14.

Its function is as follows. Binds the lower part of the 30S subunit head. Binds mRNA in the 70S ribosome, positioning it for translation. This chain is Small ribosomal subunit protein uS3, found in Buchnera aphidicola subsp. Baizongia pistaciae (strain Bp).